A 344-amino-acid polypeptide reads, in one-letter code: uncharacterized protein (344 aa).

It belongs to the glycosyltransferase 2 family.

In terms of biological role, may be involved in the production of the exopolysaccharide (EPS) component of the extracellular matrix during biofilm formation. EPS is responsible for the adhesion of chains of cells into bundles. This is an uncharacterized protein from Bacillus subtilis (strain 168).